Here is a 663-residue protein sequence, read N- to C-terminus: Probable receptor-like protein kinase At1g49730 (663 aa).

The signal sequence occupies residues 1–25 (MVVNSQAFLLALIALLATQLPSLMA). Residues 26 to 254 (ADCPLDFSGS…TNPYHLTMVP (229 aa)) are Extracellular-facing. 5 N-linked (GlcNAc...) asparagine glycosylation sites follow: Asn-36, Asn-46, Asn-70, Asn-101, and Asn-171. Residues 213–243 (SFSPVASPEPSPSTVGGISPSNSDSQMTTSR) are disordered. Positions 224–243 (PSTVGGISPSNSDSQMTTSR) are enriched in polar residues. A helical transmembrane segment spans residues 255 to 275 (TIGIVVTAVALTMLVVLVILI). The Cytoplasmic segment spans residues 276 to 663 (RRKNRELDES…PHSPINGFSF (388 aa)). One can recognise a Protein kinase domain in the interval 327–609 (NDFNTVIGQG…ESCDPVHSAF (283 aa)). ATP is bound by residues 333 to 341 (IGQGGFGTV) and Lys-355. The Proton acceptor role is filled by Asp-451. Residues 631–663 (RGDSRIFGPSSSTTSRSHYSRSLPHSPINGFSF) are disordered. The segment covering 640 to 652 (SSSTTSRSHYSRS) has biased composition (low complexity).

Belongs to the protein kinase superfamily. Ser/Thr protein kinase family.

Its subcellular location is the cell membrane. The enzyme catalyses L-seryl-[protein] + ATP = O-phospho-L-seryl-[protein] + ADP + H(+). It carries out the reaction L-threonyl-[protein] + ATP = O-phospho-L-threonyl-[protein] + ADP + H(+). This is Probable receptor-like protein kinase At1g49730 from Arabidopsis thaliana (Mouse-ear cress).